Here is a 270-residue protein sequence, read N- to C-terminus: DNA adenine methylase (270 aa).

W10, K14, D54, and D181 together coordinate S-adenosyl-L-methionine.

Belongs to the N(4)/N(6)-methyltransferase family.

The catalysed reaction is a 2'-deoxyadenosine in DNA + S-adenosyl-L-methionine = an N(6)-methyl-2'-deoxyadenosine in DNA + S-adenosyl-L-homocysteine + H(+). Its function is as follows. An alpha subtype methylase, recognizes the double-stranded sequence 5'-GATC-3' and methylates A-2. Overexpression leads to hypermutability. May be involved in methyl-directed DNA mismatch repair, initiation of chromosome replication and gene expression. The polypeptide is DNA adenine methylase (Serratia marcescens).